The following is a 444-amino-acid chain: MLQCAPKKNERLRGSCDFCTQSKLRCNKNKPSCRRCTLQQQPCVYSVARRTGRPPKHPRKANDCQEANGQHGDQDPVTSTPGGSYQQQSNHLLDVEGDGANFTLADASTTAQGRETAASPALDNALLVGETFGFSSLLDDPLIQSDDFFSFSLCMPPGEKEGHMASPRTLNGSTGPCSPTVLSSIDVPHLPARFGFLESSVESGLHGRTRPHLVEQPDKTVPSSFSEIEKIYDEGLTFSGLDSAINAVTNNGKGEPNISGTMAAHPHSKRQCFCSTSMSKLQMLVLHPTLCQKNSRARFDMALFLEEVVFSIYRDVLQCLVCQSKSLHSLASLCICTDWVIEALRDVAQDLSSGQDNLGGFRAGLYPPKDKFSICVGRFVLDDQLRESCTRSLVRYRLRKLIPIMDTMMKLNHRGAGGALSQAIRTMVEDVHHKIESALGMMEL.

Positions 16 to 43 (CDFCTQSKLRCNKNKPSCRRCTLQQQPC) form a DNA-binding region, zn(2)-C6 fungal-type. Positions 49–88 (RRTGRPPKHPRKANDCQEANGQHGDQDPVTSTPGGSYQQQ) are disordered. A compositionally biased stretch (basic residues) spans 50–59 (RTGRPPKHPR). Over residues 76–88 (PVTSTPGGSYQQQ) the composition is skewed to polar residues.

Its subcellular location is the nucleus. In terms of biological role, transcription factor that regulates the expression of the gene clusters that mediate the biosynthesis of the host-selective toxins (HSTs) AF-toxins responsible for Alternaria black spot of strawberry disease by the strawberry pathotype. On cellular level, AF-toxins affect plasma membrane of susceptible cells and cause a sudden increase in loss of K(+) after a few minutes of toxin treatment. This is Transcription activator AFTR-2 from Alternaria alternata (Alternaria rot fungus).